Consider the following 284-residue polypeptide: 2-dehydro-3-deoxyphosphooctonate aldolase (284 aa).

It belongs to the KdsA family.

The protein localises to the cytoplasm. It carries out the reaction D-arabinose 5-phosphate + phosphoenolpyruvate + H2O = 3-deoxy-alpha-D-manno-2-octulosonate-8-phosphate + phosphate. The protein operates within carbohydrate biosynthesis; 3-deoxy-D-manno-octulosonate biosynthesis; 3-deoxy-D-manno-octulosonate from D-ribulose 5-phosphate: step 2/3. Its pathway is bacterial outer membrane biogenesis; lipopolysaccharide biosynthesis. The polypeptide is 2-dehydro-3-deoxyphosphooctonate aldolase (Salmonella arizonae (strain ATCC BAA-731 / CDC346-86 / RSK2980)).